We begin with the raw amino-acid sequence, 278 residues long: TATA box-binding protein-associated factor RNA polymerase I subunit D (278 aa).

Disordered regions lie at residues 19–71 (LANR…SSFE) and 88–115 (KKRY…RRNP). Phosphoserine is present on S23. Basic residues-rich tracts occupy residues 43–53 (REKRNPIRKFV) and 88–99 (KKRYKKKKKKRY). Phosphoserine is present on residues S138 and S234.

As to quaternary structure, component of the transcription factor SL1/TIF-IB complex, composed of TBP and at least TAF1A, TAF1B, TAF1C and TAF1D. Interacts with UBTF.

It is found in the nucleus. In terms of biological role, component of the transcription factor SL1/TIF-IB complex, which is involved in the assembly of the PIC (preinitiation complex) during RNA polymerase I-dependent transcription. The rate of PIC formation probably is primarily dependent on the rate of association of SL1/TIF-IB with the rDNA promoter. SL1/TIF-IB is involved in stabilization of nucleolar transcription factor 1/UBTF on rDNA. Formation of SL1/TIF-IB excludes the association of TBP with TFIID subunits. In Pongo abelii (Sumatran orangutan), this protein is TATA box-binding protein-associated factor RNA polymerase I subunit D (TAF1D).